The chain runs to 346 residues: Acetylpolyamine amidohydrolase 1 (346 aa).

The active-site Proton donor/acceptor is His161. The Zn(2+) site is built by Asp197, His199, and Asp286.

It belongs to the histone deacetylase family. Homodimer. Zn(2+) is required as a cofactor.

It catalyses the reaction N-acetylputrescine + H2O = putrescine + acetate. The enzyme catalyses N-acetylcadaverine + H2O = cadaverine + acetate. The catalysed reaction is N(1)-acetylspermine + H2O = spermine + acetate. It carries out the reaction N(1)-acetylspermidine + H2O = spermidine + acetate. The protein operates within amine and polyamine metabolism. Its function is as follows. Catalyzes the deacetylation of acetylated polyamines such as N-acetylputrescine, N-acetylcadaverine, N(1)-acetylspermine and N(1)-acetylspermidine. Plays an important role in the metabolism of acetylated polyamines in P.aeruginosa. Is involved in the degradation pathways of N-acetylputrescine and N-acetylcadaverine, that allow P.aeruginosa to utilize these acetylpolyamines as a carbon source under glucose starvation. In vitro, can also hydrolyze artificial trifluoroacetylated and acetylated lysine-derivatives. The chain is Acetylpolyamine amidohydrolase 1 from Pseudomonas aeruginosa (strain ATCC 15692 / DSM 22644 / CIP 104116 / JCM 14847 / LMG 12228 / 1C / PRS 101 / PAO1).